The primary structure comprises 118 residues: Aspartate 1-decarboxylase (118 aa).

Ser25 (schiff-base intermediate with substrate; via pyruvic acid) is an active-site residue. The residue at position 25 (Ser25) is a Pyruvic acid (Ser). Thr57 lines the substrate pocket. Tyr58 serves as the catalytic Proton donor. Substrate is bound at residue 73–75 (GAA).

It belongs to the PanD family. As to quaternary structure, heterooctamer of four alpha and four beta subunits. The cofactor is pyruvate. Is synthesized initially as an inactive proenzyme, which is activated by self-cleavage at a specific serine bond to produce a beta-subunit with a hydroxyl group at its C-terminus and an alpha-subunit with a pyruvoyl group at its N-terminus.

The protein localises to the cytoplasm. It catalyses the reaction L-aspartate + H(+) = beta-alanine + CO2. It functions in the pathway cofactor biosynthesis; (R)-pantothenate biosynthesis; beta-alanine from L-aspartate: step 1/1. Catalyzes the pyruvoyl-dependent decarboxylation of aspartate to produce beta-alanine. The polypeptide is Aspartate 1-decarboxylase (Syntrophomonas wolfei subsp. wolfei (strain DSM 2245B / Goettingen)).